We begin with the raw amino-acid sequence, 550 residues long: CTP synthase (550 aa).

The interval 1-270 (MTKFVFVTGG…DRLICEELRL (270 aa)) is amidoligase domain. Serine 13 contacts CTP. Serine 13 is a binding site for UTP. ATP contacts are provided by residues 14 to 19 (SLGKGI) and aspartate 71. Residues aspartate 71 and glutamate 144 each contribute to the Mg(2+) site. CTP is bound by residues 151 to 153 (DIE), 191 to 196 (KTKPTQ), and lysine 227. UTP contacts are provided by residues 191-196 (KTKPTQ) and lysine 227. A Glutamine amidotransferase type-1 domain is found at 295 to 547 (TIGMVGKYVD…VEAALASQQR (253 aa)). Residue glycine 356 participates in L-glutamine binding. Catalysis depends on cysteine 383, which acts as the Nucleophile; for glutamine hydrolysis. Residues 384 to 387 (LGMQ), glutamate 407, and arginine 473 each bind L-glutamine. Active-site residues include histidine 520 and glutamate 522.

Belongs to the CTP synthase family. Homotetramer.

It carries out the reaction UTP + L-glutamine + ATP + H2O = CTP + L-glutamate + ADP + phosphate + 2 H(+). The enzyme catalyses L-glutamine + H2O = L-glutamate + NH4(+). It catalyses the reaction UTP + NH4(+) + ATP = CTP + ADP + phosphate + 2 H(+). Its pathway is pyrimidine metabolism; CTP biosynthesis via de novo pathway; CTP from UDP: step 2/2. With respect to regulation, allosterically activated by GTP, when glutamine is the substrate; GTP has no effect on the reaction when ammonia is the substrate. The allosteric effector GTP functions by stabilizing the protein conformation that binds the tetrahedral intermediate(s) formed during glutamine hydrolysis. Inhibited by the product CTP, via allosteric rather than competitive inhibition. Its function is as follows. Catalyzes the ATP-dependent amination of UTP to CTP with either L-glutamine or ammonia as the source of nitrogen. Regulates intracellular CTP levels through interactions with the four ribonucleotide triphosphates. The chain is CTP synthase from Cupriavidus taiwanensis (strain DSM 17343 / BCRC 17206 / CCUG 44338 / CIP 107171 / LMG 19424 / R1) (Ralstonia taiwanensis (strain LMG 19424)).